The following is a 68-amino-acid chain: Protein RH1 (68 aa).

The chain is Protein RH1 from Pantherophis guttatus (Corn snake).